The sequence spans 80 residues: Exodeoxyribonuclease 7 small subunit (80 aa).

This sequence belongs to the XseB family. In terms of assembly, heterooligomer composed of large and small subunits.

It is found in the cytoplasm. It catalyses the reaction Exonucleolytic cleavage in either 5'- to 3'- or 3'- to 5'-direction to yield nucleoside 5'-phosphates.. In terms of biological role, bidirectionally degrades single-stranded DNA into large acid-insoluble oligonucleotides, which are then degraded further into small acid-soluble oligonucleotides. In Enterobacter sp. (strain 638), this protein is Exodeoxyribonuclease 7 small subunit.